We begin with the raw amino-acid sequence, 218 residues long: N-(5'-phosphoribosyl)anthranilate isomerase (218 aa).

Belongs to the TrpF family.

The enzyme catalyses N-(5-phospho-beta-D-ribosyl)anthranilate = 1-(2-carboxyphenylamino)-1-deoxy-D-ribulose 5-phosphate. It participates in amino-acid biosynthesis; L-tryptophan biosynthesis; L-tryptophan from chorismate: step 3/5. In Bordetella bronchiseptica (strain ATCC BAA-588 / NCTC 13252 / RB50) (Alcaligenes bronchisepticus), this protein is N-(5'-phosphoribosyl)anthranilate isomerase.